The sequence spans 852 residues: Serine/threonine-protein phosphatase 6 regulatory subunit 3-A (852 aa).

Disordered regions lie at residues 610 to 653 (NIAF…VNHE), 714 to 742 (NTKE…VNAS), and 817 to 852 (DSAM…NGPV). Acidic residues predominate over residues 627-638 (DSEESTDSEEEE). Positions 714–732 (NTKETIRSSSPVEMETSTE) are enriched in polar residues. The span at 828-840 (PSSSSQEQRTSEQ) shows a compositional bias: low complexity.

Belongs to the SAPS family.

Functionally, regulatory subunit of protein phosphatase 6 (PP6). May function as a scaffolding PP6 subunit. The sequence is that of Serine/threonine-protein phosphatase 6 regulatory subunit 3-A (ppp6r3-a) from Xenopus laevis (African clawed frog).